Here is a 1077-residue protein sequence, read N- to C-terminus: MDTDSQRSHLSSFTMKLMDKFHSPKIKRTPSKKGKPAEVSVKIPEKPVNKEATDRFLPEGYPLPLDLEQQAVEFMSTSAVASRSQRQKNLSWLEEKEKEVVSALRYFKTIVDKMAIDKKVLEMLPGSASKVLEAILPLVQNDPRIQHSSALSSCYSRVYQSLANLIRWSDQVMLEGVNSEDKEMVTTVKGVIKAVLDGVKELVRLTIEKQGRPSPTSPVKPSSPASKPDGPAELPLTDREVEILNKTTGMSQSTELLPDATDEEVAPPKPPLPGIRVVDNSPPPALPPKKRQSAPSPTRVAVVAPMSRATSGSSLPVGINRQDFDVDCYAQRRLSGGSHSYGGESPRLSPCSSIGKLSKSDEQLSSLDRDSGQCSRNTSCETLDHYDPDYEFLQQDLSNADQIPQQTAWNLSPLPESLGESGSPFLGPPFQLPLGGHPQPDGPLAPGQQTDTPPALPEKKRRSAASQTADGSGCRVSYERHPSQYDNISGEDLQSTAPIPSVPYAPFAAILPFQHGGSSAPVEFVGDFTAPESTGDPEKPPPLPEKKNKHMLAYMQLLEDYSEPQPSMFYQTPQNEHIYQQKNKLLMEVYGFSDSFSGVDSVQELAPPPALPPKQRQLEPPAGKDGHPRDPSAVSGVPGKDSRDGSERAPKSPDALESAQSEEEVDELSLIDHNEIMSRLTLKQEGDDGPDVRGGSGDILLVHATETDRKDLVLYCEAFLTTYRTFISPEELIKKLQYRYEKFSPFADTFKKRVSKNTFFVLVRVVDELCLVELTEEILKLLMELVFRLVCNGELSLARVLRKNILDKVDQKKLLRCATSSQPLAARGVAARPGTLHDFHSHEIAEQLTLLDAELFYKIEIPEVLLWAKEQNEEKSPNLTQFTEHFNNMSYWVRSIIMLQEKAQDRERLLLKFIKIMKHLRKLNNFNSYLAILSALDSAPIRRLEWQKQTSEGLAEYCTLIDSSSSFRAYRAALSEVEPPCIPYLGLILQDLTFVHLGNPDYIDGKVNFSKRWQQFNILDSMRCFQQAHYDMRRNDDIINFFNDFSDHLAEEALWELSLKIKPRNITRRKTDREEKT.

A Glycyl lysine isopeptide (Lys-Gly) (interchain with G-Cter in SUMO2) cross-link involves residue leucine 57. 2 disordered regions span residues 207-235 and 248-300; these read IEKQGRPSPTSPVKPSSPASKPDGPAELP and TGMS…PTRV. Residues 213-228 are compositionally biased toward low complexity; it reads PSPTSPVKPSSPASKP. Phosphoserine occurs at positions 281, 293, 314, 335, and 360. Positions 281 to 292 match the SH3-binding motif; sequence SPPPALPPKKRQ. Disordered regions lie at residues 336-376 and 411-494; these read GGSH…QCSR and LSPL…EDLQ. Basic and acidic residues predominate over residues 358-371; it reads SKSDEQLSSLDRDS. The SH3-binding signature appears at 451–462; the sequence is DTPPALPEKKRR. Positions 484–494 are enriched in polar residues; that stretch reads QYDNISGEDLQ. Position 504 is a phosphotyrosine; by HCK (tyrosine 504). Short sequence motifs (SH3-binding) lie at residues 538–549 and 606–617; these read EKPPPLPEKKNK and APPPALPPKQRQ. A disordered region spans residues 600–670; sequence DSVQELAPPP…SEEEVDELSL (71 aa). Residues 640–651 are compositionally biased toward basic and acidic residues; sequence KDSRDGSERAPK. Acidic residues predominate over residues 660–669; the sequence is QSEEEVDELS. Residues 688 to 810 enclose the N-terminal Ras-GEF domain; that stretch reads DGPDVRGGSG…LRKNILDKVD (123 aa). A Ras-GEF domain is found at 840-1064; the sequence is HSHEIAEQLT…WELSLKIKPR (225 aa).

As to quaternary structure, interacts with HCK (via SH3-binding sites). Interacts with CRK (via SH3-binding sites). In terms of processing, phosphorylation at Tyr-504 enhances activity as Rap guanine nucleotide exchange factor. As to expression, ubiquitously expressed in adult and fetus. Expression is high in adult skeletal muscle and placenta and in fetal brain and heart. Low levels of expression in adult and fetal liver.

It localises to the early endosome. Functionally, guanine nucleotide-releasing protein that binds to SH3 domain of CRK and GRB2/ASH. Transduces signals from CRK to activate RAS. Involved in cell branching and adhesion mediated by BCAR1-CRK-RAPGEF1 signaling and activation of RAP1. Plays a role in the establishment of basal endothelial barrier function. Plays a role in nerve growth factor (NGF)-induced sustained activation of Rap1 and neurite outgrowth. The polypeptide is Rap guanine nucleotide exchange factor 1 (RAPGEF1) (Homo sapiens (Human)).